The following is a 563-amino-acid chain: uncharacterized protein (563 aa).

A DNA-binding region (zn(2)-C6 fungal-type) is located at residues 19-45 (CLICRRRKVKCDRQQPCSRCKERNEVC). Residues 56-78 (NVGPHPSHSENASDSETTLEVSP) form a disordered region. The span at 64 to 75 (SENASDSETTLE) shows a compositional bias: polar residues.

The protein resides in the nucleus. This is an uncharacterized protein from Schizosaccharomyces pombe (strain 972 / ATCC 24843) (Fission yeast).